The primary structure comprises 329 residues: MQTLAQNLTSQGVDASLTQLIHTLANTSKEISHAVRHGALAGVLGATEQENVQGETQKKLDVITNDMLKDALKADNTVRGLASEEEDYIVEVGDKGEYLVCFDPLDGSSNIDINSLVGTIFSVLPAPTGELTESSFLQAGRKQVAAGYVLYGPSTMLALTTGKGVQLFTLNPETNEYLLTTEAMSISKDTGEFAINMSNQRFWEAPMQTYISDLLLGTIGPREKAFNMRWIAAMVGDVHRVLSRGGIFTYPTDNKNPQKPYKLRLMYEANPMSFLVEQAGGIASTGYEAIMDIEPSEIHQRVAVILGSANEVKACLEYHSLDYSEEPAL.

Positions 84, 103, 105, and 106 each coordinate Mg(2+). Substrate-binding positions include D106–S109, N196, and K262. E268 serves as a coordination point for Mg(2+).

It belongs to the FBPase class 1 family. In terms of assembly, homotetramer. It depends on Mg(2+) as a cofactor.

It localises to the cytoplasm. It catalyses the reaction beta-D-fructose 1,6-bisphosphate + H2O = beta-D-fructose 6-phosphate + phosphate. It participates in carbohydrate biosynthesis; gluconeogenesis. This is Fructose-1,6-bisphosphatase class 1 from Shewanella woodyi (strain ATCC 51908 / MS32).